We begin with the raw amino-acid sequence, 166 residues long: Putative membrane protein 162 (166 aa).

A topological domain (intravirion) is located at residue methionine 1. The chain crosses the membrane as a helical span at residues 2–22; it reads YYPAVQVLIGIILVDNFNTEF. The Virion surface segment spans residues 23-166; it reads LSSEKKNCKT…TIMGIARNIL (144 aa).

Belongs to the asfivirus envelope protein p22 family.

It is found in the virion membrane. Its subcellular location is the host cell membrane. The polypeptide is Putative membrane protein 162 (African swine fever virus (isolate Tick/Malawi/Lil 20-1/1983) (ASFV)).